Consider the following 245-residue polypeptide: Octanoyltransferase (245 aa).

Positions 54–242 (KTAHEQVWLL…AFEKIFGPTI (189 aa)) constitute a BPL/LPL catalytic domain. Substrate contacts are provided by residues 93-100 (RGGEFTYH), 173-175 (AIG), and 186-188 (GVS). Cys204 functions as the Acyl-thioester intermediate in the catalytic mechanism.

This sequence belongs to the LipB family.

It localises to the cytoplasm. The enzyme catalyses octanoyl-[ACP] + L-lysyl-[protein] = N(6)-octanoyl-L-lysyl-[protein] + holo-[ACP] + H(+). It functions in the pathway protein modification; protein lipoylation via endogenous pathway; protein N(6)-(lipoyl)lysine from octanoyl-[acyl-carrier-protein]: step 1/2. Catalyzes the transfer of endogenously produced octanoic acid from octanoyl-acyl-carrier-protein onto the lipoyl domains of lipoate-dependent enzymes. Lipoyl-ACP can also act as a substrate although octanoyl-ACP is likely to be the physiological substrate. The chain is Octanoyltransferase from Bartonella tribocorum (strain CIP 105476 / IBS 506).